The sequence spans 477 residues: Cysteine--tRNA ligase (477 aa).

Residue C29 participates in Zn(2+) binding. The short motif at 31–41 is the 'HIGH' region element; sequence PTVQASPHIGH. Zn(2+)-binding residues include C219, H244, and E248. Residues 275–279 carry the 'KMSKS' region motif; that stretch reads KMSKS. ATP is bound at residue K278.

It belongs to the class-I aminoacyl-tRNA synthetase family. As to quaternary structure, monomer. Zn(2+) is required as a cofactor.

It localises to the cytoplasm. It catalyses the reaction tRNA(Cys) + L-cysteine + ATP = L-cysteinyl-tRNA(Cys) + AMP + diphosphate. The sequence is that of Cysteine--tRNA ligase from Leifsonia xyli subsp. xyli (strain CTCB07).